Reading from the N-terminus, the 720-residue chain is Pollen receptor-like kinase 1 (720 aa).

The stretch at 40–64 is one LRR 1; degenerate repeat; sequence LCSRGHLLIIFLLLVSPFNDAAVDV. The LRR 2; degenerate repeat unit spans residues 123 to 146; the sequence is LGVLCYEGDVWGLQLENLDLSGVI. LRR repeat units follow at residues 154–179, 226–248, and 249–273; these read LHFL…SLEP, LPQV…HFPP, and NVLK…SLMD. Residues 288 to 319 form a disordered region; the sequence is LESACNSPSQEANNPDSRNSSTISGQSSTDVI. A compositionally biased stretch (polar residues) spans 291–317; that stretch reads ACNSPSQEANNPDSRNSSTISGQSSTD. The chain crosses the membrane as a helical span at residues 330-350; it reads MLIVAVCLVVLCLLIVLILII. Composition is skewed to polar residues over residues 356–382 and 389–405; these read SSSQ…TSSA and LSGN…NSNK. Residues 356–409 form a disordered region; the sequence is SSSQNPQPVESNYSNNDRDQNAFTSSAPDDHVTLSGNSTYSNNQHSNSNKAEAP. The 269-residue stretch at 434 to 702 folds into the Protein kinase domain; the sequence is RASAEVLGSG…KEVVQSIQSL (269 aa). Residues 440–448 and lysine 462 contribute to the ATP site; that span reads LGSGNLGSS.

This sequence belongs to the protein kinase superfamily. As to quaternary structure, interacts with KIP1. In terms of processing, autophosphorylated. As to expression, expressed in mature pollen grains and pollen tubes, but not in style, petal, leaf, root or sepal. Very low expression in the ovary.

The protein localises to the microsome membrane. The protein resides in the cytoplasm. It carries out the reaction L-seryl-[protein] + ATP = O-phospho-L-seryl-[protein] + ADP + H(+). The enzyme catalyses L-threonyl-[protein] + ATP = O-phospho-L-threonyl-[protein] + ADP + H(+). The catalysed reaction is L-tyrosyl-[protein] + ATP = O-phospho-L-tyrosyl-[protein] + ADP + H(+). Functionally, dual-specificity kinase with both serine/threonine and tyrosine kinase activities. Required for postmeiotic development of microspores. Involved in embryo sac development at the late stages of megagametogenesis. Involved in the phosphorylation of KIP1. The sequence is that of Pollen receptor-like kinase 1 from Petunia integrifolia (Violet-flowered petunia).